The chain runs to 287 residues: ATP synthase gamma chain (287 aa).

It belongs to the ATPase gamma chain family. In terms of assembly, F-type ATPases have 2 components, CF(1) - the catalytic core - and CF(0) - the membrane proton channel. CF(1) has five subunits: alpha(3), beta(3), gamma(1), delta(1), epsilon(1). CF(0) has three main subunits: a, b and c.

Its subcellular location is the cell membrane. In terms of biological role, produces ATP from ADP in the presence of a proton gradient across the membrane. The gamma chain is believed to be important in regulating ATPase activity and the flow of protons through the CF(0) complex. The protein is ATP synthase gamma chain of Bacillus velezensis (strain DSM 23117 / BGSC 10A6 / LMG 26770 / FZB42) (Bacillus amyloliquefaciens subsp. plantarum).